The chain runs to 292 residues: Ribosomal protein L11 methyltransferase (292 aa).

S-adenosyl-L-methionine-binding residues include Thr-138, Gly-159, Asp-181, and Asn-225.

Belongs to the methyltransferase superfamily. PrmA family.

Its subcellular location is the cytoplasm. It catalyses the reaction L-lysyl-[protein] + 3 S-adenosyl-L-methionine = N(6),N(6),N(6)-trimethyl-L-lysyl-[protein] + 3 S-adenosyl-L-homocysteine + 3 H(+). Methylates ribosomal protein L11. The chain is Ribosomal protein L11 methyltransferase from Leuconostoc citreum (strain KM20).